Reading from the N-terminus, the 193-residue chain is dCTP deaminase (193 aa).

DCTP contacts are provided by residues 110-115 (RSSLAR), Asp-128, 136-138 (VLE), Tyr-171, Lys-178, and Gln-182. The active-site Proton donor/acceptor is Glu-138. A disordered region spans residues 169–193 (RPYNRREDAKYRNQQGAVASRIDKD).

The protein belongs to the dCTP deaminase family. In terms of assembly, homotrimer.

The catalysed reaction is dCTP + H2O + H(+) = dUTP + NH4(+). The protein operates within pyrimidine metabolism; dUMP biosynthesis; dUMP from dCTP (dUTP route): step 1/2. Catalyzes the deamination of dCTP to dUTP. The polypeptide is dCTP deaminase (Sodalis glossinidius (strain morsitans)).